Reading from the N-terminus, the 264-residue chain is MLRSLYSGISGMKNFQTKLDVIGNNIANVNTVGFKKSRVTFKDMVSQTIAGGSAAGATIGGTNSKQIGLGSSSGTIDTIHSTSATQSTGRTLDLAIDGDGYFRIDTGDGTAYTRAGNFYLDNTGTLVTGDGYHVLNMNGGTIKIPTDAQSFSIGSDGKVSIVDAEGKTQDGGQIGIVTFANSDGLDKIGSNLYRESLNSGTASAANQPGDGGTGALKSGFLEMSNVDLTDEFTEMIVAQRGFQSNSKIITTSDEILQELVNLKR.

Belongs to the flagella basal body rod proteins family. As to quaternary structure, the basal body constitutes a major portion of the flagellar organelle and consists of four rings (L,P,S, and M) mounted on a central rod. The rod consists of about 26 subunits of FlgG in the distal portion, and FlgB, FlgC and FlgF are thought to build up the proximal portion of the rod with about 6 subunits each.

Its subcellular location is the bacterial flagellum basal body. This is Flagellar basal-body rod protein FlgG (flgG) from Bacillus subtilis (strain 168).